We begin with the raw amino-acid sequence, 343 residues long: MAAEEEDEVEWVVESIAGFLRGPDWSIPILDFVEQKCEVFDDEEESKLTYTEIHQEYKELVEKLLESYLKEIGINEDQFQEACTSPLAKTRTSQAILQPVLAAEDFTIFKAMMVQKNIEMQLQAIRIIQERNGVLPDCLTDGADVVSDLEQEEMKILREVLRKSKEEYDQEEERKRKKQSSEAKMEELPVYTSEAEKMSNSQGDGEHFVQPPSEVKVHFANQSVQPLARKMELLPETSSLTQKGLKIPGLEHASMEGPIANLSALGTEELRQREHYLKQKRDKLLSMRKDTRTKQIQNTEQKGKPTREAEEMTEKPEMTAEEKQTLLKRRLLAEKLKEEVINK.

2 positions are modified to phosphoserine: Ser-85 and Ser-147. Residues 147–187 (SDLEQEEMKILREVLRKSKEEYDQEEERKRKKQSSEAKMEE) are a coiled coil. The disordered stretch occupies residues 165–188 (KEEYDQEEERKRKKQSSEAKMEEL). Residue Ser-201 is modified to Phosphoserine. Composition is skewed to basic and acidic residues over residues 279–293 (QKRDKLLSMRKDTRT) and 301–323 (QKGKPTREAEEMTEKPEMTAEEK). The interval 279–323 (QKRDKLLSMRKDTRTKQIQNTEQKGKPTREAEEMTEKPEMTAEEK) is disordered.

This sequence belongs to the CFAP36 family. Interacts with ARL3.

The protein localises to the nucleus. Its subcellular location is the cytoplasm. It localises to the cell projection. The protein resides in the cilium. It is found in the flagellum. In terms of biological role, may act as an effector for ARL3. The protein is Cilia- and flagella-associated protein 36 of Mus musculus (Mouse).